A 189-amino-acid chain; its full sequence is UPF0301 protein RT0098 (189 aa).

It belongs to the UPF0301 (AlgH) family.

The protein is UPF0301 protein RT0098 of Rickettsia typhi (strain ATCC VR-144 / Wilmington).